Consider the following 214-residue polypeptide: tRNA (guanine-N(7)-)-methyltransferase (214 aa).

S-adenosyl-L-methionine-binding residues include Glu44, Glu69, Asp96, and Asp118. Asp118 is a catalytic residue. Substrate contacts are provided by residues Lys122, Asp154, and 191-194 (TEYE).

Belongs to the class I-like SAM-binding methyltransferase superfamily. TrmB family.

The enzyme catalyses guanosine(46) in tRNA + S-adenosyl-L-methionine = N(7)-methylguanosine(46) in tRNA + S-adenosyl-L-homocysteine. It participates in tRNA modification; N(7)-methylguanine-tRNA biosynthesis. Functionally, catalyzes the formation of N(7)-methylguanine at position 46 (m7G46) in tRNA. The protein is tRNA (guanine-N(7)-)-methyltransferase of Listeria monocytogenes serovar 1/2a (strain ATCC BAA-679 / EGD-e).